Here is a 459-residue protein sequence, read N- to C-terminus: SLIT-ROBO Rho GTPase-activating protein 2C (459 aa).

Residues 22 to 325 enclose the F-BAR domain; the sequence is KEIRAQLTEQ…AVENLDATSD (304 aa). Basic and acidic residues predominate over residues 181 to 202; it reads LKEAEKQEEKQIGKSVKQEDRQ. The segment at 181-211 is disordered; sequence LKEAEKQEEKQIGKSVKQEDRQTPCSPDSTA. Residues 363-401 are a coiled coil; sequence QSELVQRCQQLQSRLSTLKIENEEVKKTMEATLQTIQDI.

In terms of assembly, homodimer. Interacts (via F-BAR domain) with SRGAP2/SRGAP2A (via F-BAR domain); formation of the heterodimer inhibits SRGAP2/SRGAP2A function. In terms of tissue distribution, ubiquitously expressed with higher expression in cerebellum. Probably expressed in fetal and adult neurons (at protein level).

In terms of biological role, human-specific protein that acts as a key modifier of cortical connectivity in the human brain. Acts by inhibiting the functions of ancestral paralog SRGAP2/SRGAP2A, a postsynaptic protein that regulates excitatory and inhibitory synapse maturation and density in cortical pyramidal neurons. SRGAP2C is unstable but is able to heterodimerize with SRGAP2/SRGAP2A, thereby reducing SRGAP2/SRGAP2A levels through proteasome-dependent degradation. Inhibition of SRGAP2/SRGAP2A by SRGAP2C leads to an increase in synaptic density and protracted synaptic maturation of both excitatory and inhibitory synapses. Modifies cortical circuit connectivity by increasing the number of local and long-range cortical inputs received by layer 2/3 pyramidal neurons. Also able to increase the probability of sensory-evoked responses by layer 2/3 pyramidal neurons. The sequence is that of SLIT-ROBO Rho GTPase-activating protein 2C from Homo sapiens (Human).